The primary structure comprises 310 residues: uncharacterized protein (310 aa).

A compositionally biased stretch (basic residues) spans M1 to R11. Disordered stretches follow at residues M1–A227 and A242–E310. Over residues M12–P50 the composition is skewed to polar residues. A compositionally biased stretch (basic and acidic residues) spans S51–E80. A compositionally biased stretch (acidic residues) spans P91–S105. Positions T110 to L121 are enriched in low complexity. Composition is skewed to basic and acidic residues over residues V126–P150 and L182–P195. The segment covering A242–E253 has biased composition (acidic residues). Residues N254–L265 show a composition bias toward basic and acidic residues. At S285 the chain carries Phosphoserine. Positions D297–E310 are enriched in polar residues.

This is an uncharacterized protein from Schizosaccharomyces pombe (strain 972 / ATCC 24843) (Fission yeast).